The primary structure comprises 390 residues: S-adenosylmethionine synthase 3 (390 aa).

E9 contacts Mg(2+). An ATP-binding site is contributed by H15. Position 43 (E43) interacts with K(+). L-methionine is bound by residues E56 and Q99. Residues 167–169 (DGK), 235–238 (SGRF), D246, 252–253 (RK), A269, K273, and K277 each bind ATP. D246 lines the L-methionine pocket. K277 contacts L-methionine.

It belongs to the AdoMet synthase family. In terms of assembly, homotetramer. Interacts with GRF3. Mn(2+) is required as a cofactor. The cofactor is Mg(2+). Requires Co(2+) as cofactor. K(+) serves as cofactor.

It localises to the cytoplasm. It carries out the reaction L-methionine + ATP + H2O = S-adenosyl-L-methionine + phosphate + diphosphate. It participates in amino-acid biosynthesis; S-adenosyl-L-methionine biosynthesis; S-adenosyl-L-methionine from L-methionine: step 1/1. With respect to regulation, inhibited by 5,5'-dithiobis-2-nitrobenzoic acid (DTNB) and N-ethylmaleimide (NEM) (in vitro). Its function is as follows. Catalyzes the formation of S-adenosylmethionine from methionine and ATP. The reaction comprises two steps that are both catalyzed by the same enzyme: formation of S-adenosylmethionine (AdoMet) and triphosphate, and subsequent hydrolysis of the triphosphate. Involved in the biosynthesis of lignin. This chain is S-adenosylmethionine synthase 3 (METK3), found in Arabidopsis thaliana (Mouse-ear cress).